The chain runs to 64 residues: Conotoxin Tx3.5-a (64 aa).

Positions 1–19 are cleaved as a signal peptide; sequence MSKLGVLLTICLLLFPLTA. The propeptide occupies 20–47; it reads LPLDGDQPADQAAERMQAEQHPLFDQKR. Disulfide bonds link Cys49–Cys58, Cys50–Cys62, and Cys54–Cys63. The residue at position 63 (Cys63) is a Cysteine amide.

The protein belongs to the conotoxin M superfamily. Post-translationally, contains 3 disulfide bonds. In terms of processing, two peptides are produced from this precursor. Conotoxin Tx3.5-b is amidated at Cys-63, conotoxin Tx3.5-a has an unmodified C-terminus. As to expression, expressed by the venom duct. Is present in all duct parts with a highest content in part 2 (proximal of the venom bulb) and then decreases in concentration toward the end of the duct.

It is found in the secreted. The protein is Conotoxin Tx3.5-a of Conus textile (Cloth-of-gold cone).